Consider the following 60-residue polypeptide: Defensin-like protein 4 (60 aa).

4 disulfides stabilise this stretch: Cys4–Cys56, Cys17–Cys41, Cys26–Cys51, and Cys30–Cys53.

The protein belongs to the DEFL family. Protease inhibitor I18 (RTI/MTI-2) subfamily.

It localises to the secreted. Inhibits trypsin and chymotrypsin. The protein is Defensin-like protein 4 of Brassica napus (Rape).